Consider the following 667-residue polypeptide: Probable Na(+)/H(+) antiporter nhx-9 (667 aa).

A run of 8 helical transmembrane segments spans residues valine 41 to methionine 61, leucine 73 to alanine 93, serine 97 to proline 117, valine 128 to leucine 148, isoleucine 165 to glutamate 185, phenylalanine 192 to tyrosine 212, leucine 236 to alanine 256, and isoleucine 268 to valine 288. Asparagine 310 carries N-linked (GlcNAc...) asparagine glycosylation. 4 helical membrane passes run methionine 325–serine 345, leucine 351–valine 371, phenylalanine 390–proline 410, and methionine 418–isoleucine 438. The interval threonine 637–valine 667 is disordered. At threonine 644 the chain carries Phosphothreonine.

It belongs to the monovalent cation:proton antiporter 1 (CPA1) transporter (TC 2.A.36) family. Post-translationally, phosphorylated. As to expression, in early stage larva, expressed in the twin excretory cell processes. At later larval stages, expression is more restricted, resulting in a 'beads on a chain' appearance.

The protein localises to the cell membrane. Its function is as follows. Serves some physiological function other than regulation of cellular pH. In Caenorhabditis elegans, this protein is Probable Na(+)/H(+) antiporter nhx-9 (nhx-9).